We begin with the raw amino-acid sequence, 168 residues long: Large ribosomal subunit protein uL10 (168 aa).

This sequence belongs to the universal ribosomal protein uL10 family. In terms of assembly, part of the ribosomal stalk of the 50S ribosomal subunit. The N-terminus interacts with L11 and the large rRNA to form the base of the stalk. The C-terminus forms an elongated spine to which L12 dimers bind in a sequential fashion forming a multimeric L10(L12)X complex.

Forms part of the ribosomal stalk, playing a central role in the interaction of the ribosome with GTP-bound translation factors. This Ralstonia pickettii (strain 12J) protein is Large ribosomal subunit protein uL10.